The following is a 388-amino-acid chain: Na(+)/H(+) antiporter NhaA (388 aa).

Over 1–11 (MKHLHRFFSSD) the chain is Cytoplasmic. The chain crosses the membrane as a helical span at residues 12–31 (ASGGIILIIAAVLAMIMANS). The Periplasmic portion of the chain corresponds to 32 to 58 (GATSGWYHDFLETPVQLRVGTLEINKN). Residues 59–80 (MLLWINDALMAVFFLLVGLEVK) traverse the membrane as a helical segment. Topologically, residues 81-96 (RELMQGSLASLRQAAF) are cytoplasmic. A helical membrane pass occupies residues 97–116 (PVIAAIGGMIVPALLYLAFN). Topologically, residues 117–122 (YADPIT) are periplasmic. A helical transmembrane segment spans residues 123-130 (REGWAIPA). The Cytoplasmic segment spans residues 131–154 (ATDIAFALGVLALLGSRVPLALKI). Residues 155-176 (FLMALAIIDDLGAIIIIALFYT) traverse the membrane as a helical segment. The Periplasmic portion of the chain corresponds to 177 to 180 (NDLS). The helical transmembrane segment at 181-200 (MASLGVAAVAIAVLAVLNLC) threads the bilayer. Residues 201–204 (GVRR) are Cytoplasmic-facing. Residues 205–222 (TGVYILVGVVLWTAVLKS) traverse the membrane as a helical segment. Glycine 223 is a topological domain (periplasmic). A helical transmembrane segment spans residues 224 to 236 (VHATLAGVIVGFF). At 237 to 253 (IPLKEKHGRSPAKRLEH) the chain is on the cytoplasmic side. The helical transmembrane segment at 254–272 (VLHPWVAYLILPLFAFANA) threads the bilayer. At 273-286 (GVSLQGVTLEGLTS) the chain is on the periplasmic side. A helical membrane pass occupies residues 287–310 (ILPLGIIAGLLIGKPLGISLFCWL). Residues 311 to 339 (ALRLKLAHLPEGTTYQQIMAVGILCGIGF) lie on the Cytoplasmic side of the membrane. Residues 340-350 (TMSIFIASLAF) form a helical membrane-spanning segment. At 351–357 (GSVDPEL) the chain is on the periplasmic side. A helical transmembrane segment spans residues 358–380 (INWAKLGILVGSISSAVIGYSWL). Over 381–388 (RVRLRPSV) the chain is Cytoplasmic.

Belongs to the NhaA Na(+)/H(+) (TC 2.A.33) antiporter family.

It is found in the cell inner membrane. It carries out the reaction Na(+)(in) + 2 H(+)(out) = Na(+)(out) + 2 H(+)(in). Its function is as follows. Na(+)/H(+) antiporter that extrudes sodium in exchange for external protons. This Escherichia coli O6:K15:H31 (strain 536 / UPEC) protein is Na(+)/H(+) antiporter NhaA.